Here is a 674-residue protein sequence, read N- to C-terminus: Protein kinase C delta type (674 aa).

The C2 domain maps to M1 to L106. A phosphothreonine mark is found at T43 and T50. Y64 carries the phosphotyrosine modification. The residue at position 130 (S130) is a Phosphoserine. Residue T141 is modified to Phosphothreonine. At Y155 the chain carries Phosphotyrosine. The Phorbol-ester/DAG-type 1 zinc-finger motif lies at N158–C208. A Phosphothreonine modification is found at T218. The Phorbol-ester/DAG-type 2 zinc finger occupies P230–C280. S299 bears the Phosphoserine; by autocatalysis mark. A phosphotyrosine; by SRC mark is found at Y311 and Y332. The region spanning F347 to F601 is the Protein kinase domain. Residue L353–V361 participates in ATP binding. The residue at position 372 (Y372) is a Phosphotyrosine. K376 is an ATP binding site. T449 carries the post-translational modification Phosphothreonine. D471 acts as the Proton acceptor in catalysis. Position 504 is a phosphoserine (S504). T505 is modified (phosphothreonine; by autocatalysis). Y565 carries the phosphotyrosine modification. In terms of domain architecture, AGC-kinase C-terminal spans K602–D673. A phosphoserine mark is found at S643, S652, and S662.

The protein belongs to the protein kinase superfamily. AGC Ser/Thr protein kinase family. PKC subfamily. Interacts with PDPK1 (via N-terminal region). Interacts with RAD9A. Interacts with CDCP1. Interacts with MUC1. Interacts with VASP. Interacts with CAVIN3. Interacts with PRKD2 (via N-terminus and zing-finger domain 1 and 2) in response to oxidative stress; the interaction is independent of PRKD2 tyrosine phosphorylation. Interacts with PLSC3; interaction is enhanced by UV irradiation. Post-translationally, autophosphorylated and/or phosphorylated at Thr-505, within the activation loop; phosphorylation at Thr-505 is not a prerequisite for enzymatic activity. Autophosphorylated at Ser-299. Upon TNFSF10/TRAIL treatment, phosphorylated at Tyr-155; phosphorylation is required for its translocation to the endoplasmic reticulum and cleavage by caspase-3. Phosphorylated at Tyr-311, Tyr-332 and Tyr-565; phosphorylation of Tyr-311 and Tyr-565 following thrombin or zymosan stimulation potentiates its kinase activity. Phosphorylated by protein kinase PDPK1; phosphorylation is inhibited by the apoptotic C-terminal cleavage product of PKN2. Phosphorylated at Tyr-311 through a SYK and SRC mechanism downstream of C-type lectin receptors activation, promoting its activation. In terms of processing, proteolytically cleaved into a catalytic subunit and a regulatory subunit by caspase-3 during apoptosis which results in kinase activation. Isoform 1 is highly expressed in developing pro- and pre-B-cells and moderately in mature T-cells. Isoform 2 is highly expressed in testis and ovary and at a lower level in thymocytes, brain and kidney.

It localises to the cytoplasm. The protein localises to the perinuclear region. Its subcellular location is the nucleus. It is found in the cell membrane. The protein resides in the mitochondrion. It localises to the endomembrane system. The enzyme catalyses L-seryl-[protein] + ATP = O-phospho-L-seryl-[protein] + ADP + H(+). It carries out the reaction L-threonyl-[protein] + ATP = O-phospho-L-threonyl-[protein] + ADP + H(+). It catalyses the reaction L-tyrosyl-[protein] + ATP = O-phospho-L-tyrosyl-[protein] + ADP + H(+). Novel PKCs (PRKCD, PRKCE, PRKCH and PRKCQ) are calcium-insensitive, but activated by diacylglycerol (DAG) and phosphatidylserine. Three specific sites; Thr-505 (activation loop of the kinase domain), Ser-643 (turn motif) and Ser-662 (hydrophobic region), need to be phosphorylated for its full activation. Activated by caspase-3 (CASP3) cleavage during apoptosis. After cleavage, the pseudosubstrate motif in the regulatory subunit is released from the substrate recognition site of the catalytic subunit, which enables PRKCD to become constitutively activated. The catalytic subunit which displays properties of a sphingosine-dependent protein kinase is activated by D-erythro-sphingosine (Sph) or N,N-dimethyl-D-erythrosphingosine (DMS) or N,N,N-trimethyl-D-erythrosphingosine (TMS), but not by ceramide or Sph-1-P and is strongly inhibited by phosphatidylserine. In terms of biological role, calcium-independent, phospholipid- and diacylglycerol (DAG)-dependent serine/threonine-protein kinase that plays contrasting roles in cell death and cell survival by functioning as a pro-apoptotic protein during DNA damage-induced apoptosis, but acting as an anti-apoptotic protein during cytokine receptor-initiated cell death, is involved in tumor suppression, is required for oxygen radical production by NADPH oxidase and acts as a positive or negative regulator in platelet functional responses. Negatively regulates B cell proliferation and also has an important function in self-antigen induced B cell tolerance induction. Upon DNA damage, activates the promoter of the death-promoting transcription factor BCLAF1/Btf to trigger BCLAF1-mediated p53/TP53 gene transcription and apoptosis. In response to oxidative stress, interact with and activate CHUK/IKKA in the nucleus, causing the phosphorylation of p53/TP53. In the case of ER stress or DNA damage-induced apoptosis, can form a complex with the tyrosine-protein kinase ABL1 which trigger apoptosis independently of p53/TP53. In cytosol can trigger apoptosis by activating MAPK11 or MAPK14, inhibiting AKT1 and decreasing the level of X-linked inhibitor of apoptosis protein (XIAP), whereas in nucleus induces apoptosis via the activation of MAPK8 or MAPK9. Upon ionizing radiation treatment, is required for the activation of the apoptosis regulators BAX and BAK, which trigger the mitochondrial cell death pathway. Can phosphorylate MCL1 and target it for degradation which is sufficient to trigger for BAX activation and apoptosis. Is required for the control of cell cycle progression both at G1/S and G2/M phases. Mediates phorbol 12-myristate 13-acetate (PMA)-induced inhibition of cell cycle progression at G1/S phase by up-regulating the CDK inhibitor CDKN1A/p21 and inhibiting the cyclin CCNA2 promoter activity. In response to UV irradiation can phosphorylate CDK1, which is important for the G2/M DNA damage checkpoint activation. Can protect glioma cells from the apoptosis induced by TNFSF10/TRAIL, probably by inducing increased phosphorylation and subsequent activation of AKT1. Can also act as tumor suppressor upon mitogenic stimulation with PMA or TPA. In N-formyl-methionyl-leucyl-phenylalanine (fMLP)-treated cells, is required for NCF1 (p47-phox) phosphorylation and activation of NADPH oxidase activity, and regulates TNF-elicited superoxide anion production in neutrophils, by direct phosphorylation and activation of NCF1 or indirectly through MAPK1/3 (ERK1/2) signaling pathways. Involved in antifungal immunity by mediating phosphorylation and activation of CARD9 downstream of C-type lectin receptors activation, promoting interaction between CARD9 and BCL10, followed by activation of NF-kappa-B and MAP kinase p38 pathways. May also play a role in the regulation of NADPH oxidase activity in eosinophil after stimulation with IL5, leukotriene B4 or PMA. In collagen-induced platelet aggregation, acts a negative regulator of filopodia formation and actin polymerization by interacting with and negatively regulating VASP phosphorylation. Downstream of PAR1, PAR4 and CD36/GP4 receptors, regulates differentially platelet dense granule secretion; acts as a positive regulator in PAR-mediated granule secretion, whereas it negatively regulates CD36/GP4-mediated granule release. Phosphorylates MUC1 in the C-terminal and regulates the interaction between MUC1 and beta-catenin. The catalytic subunit phosphorylates 14-3-3 proteins (YWHAB, YWHAZ and YWHAH) in a sphingosine-dependent fashion. Phosphorylates ELAVL1 in response to angiotensin-2 treatment. Phosphorylates mitochondrial phospholipid scramblase 3 (PLSCR3), resulting in increased cardiolipin expression on the mitochondrial outer membrane which facilitates apoptosis. Phosphorylates SMPD1 which induces SMPD1 secretion. The protein is Protein kinase C delta type of Mus musculus (Mouse).